The primary structure comprises 264 residues: Major prion protein (264 aa).

The signal sequence occupies residues methionine 1–cysteine 24. Residues lysine 25 to alanine 241 form an interaction with GRB2, ERI3 and SYN1 region. A disordered region spans residues proline 28–threonine 118. 6 tandem repeats follow at residues proline 54–glutamine 62, proline 63–glutamine 70, proline 71–glutamine 78, proline 79–glutamine 86, proline 87–glutamine 94, and proline 95–glutamine 103. A 6 X 8 AA tandem repeats of P-H-G-G-G-W-G-Q region spans residues proline 54–glutamine 103. Positions glutamine 55 to histidine 107 are enriched in gly residues. The Cu(2+) site is built by histidine 72, glycine 73, glycine 74, histidine 80, glycine 81, glycine 82, histidine 88, glycine 89, glycine 90, histidine 96, glycine 98, and glycine 99. A disulfide bridge links cysteine 190 with cysteine 225. 2 N-linked (GlcNAc...) asparagine glycosylation sites follow: asparagine 192 and asparagine 208. The GPI-anchor amidated alanine moiety is linked to residue alanine 241. The propeptide at serine 242–glycine 264 is removed in mature form.

This sequence belongs to the prion family. Monomer and homodimer. Has a tendency to aggregate into amyloid fibrils containing a cross-beta spine, formed by a steric zipper of superposed beta-strands. Soluble oligomers may represent an intermediate stage on the path to fibril formation. Copper binding may promote oligomerization. Interacts with GRB2, APP, ERI3/PRNPIP and SYN1. Mislocalized cytosolically exposed PrP interacts with MGRN1; this interaction alters MGRN1 subcellular location and causes lysosomal enlargement. Interacts with KIAA1191.

The protein localises to the cell membrane. The protein resides in the golgi apparatus. Its primary physiological function is unclear. Has cytoprotective activity against internal or environmental stresses. May play a role in neuronal development and synaptic plasticity. May be required for neuronal myelin sheath maintenance. May play a role in iron uptake and iron homeostasis. Soluble oligomers are toxic to cultured neuroblastoma cells and induce apoptosis (in vitro). Association with GPC1 (via its heparan sulfate chains) targets PRNP to lipid rafts. Also provides Cu(2+) or Zn(2+) for the ascorbate-mediated GPC1 deaminase degradation of its heparan sulfate side chains. This chain is Major prion protein (PRNP), found in Boselaphus tragocamelus (Nilgai).